The chain runs to 259 residues: 5'-nucleotidase SurE (259 aa).

Asp8, Asp9, Ser39, and Asn95 together coordinate a divalent metal cation.

Belongs to the SurE nucleotidase family. Requires a divalent metal cation as cofactor.

Its subcellular location is the cytoplasm. It catalyses the reaction a ribonucleoside 5'-phosphate + H2O = a ribonucleoside + phosphate. Nucleotidase that shows phosphatase activity on nucleoside 5'-monophosphates. This Pseudothermotoga lettingae (strain ATCC BAA-301 / DSM 14385 / NBRC 107922 / TMO) (Thermotoga lettingae) protein is 5'-nucleotidase SurE.